The following is a 294-amino-acid chain: Putative S-adenosyl-L-methionine-dependent methyltransferase RHA1_ro00605 (294 aa).

Residues Asp-120 and 149–150 (DL) each bind S-adenosyl-L-methionine.

It belongs to the UPF0677 family.

Exhibits S-adenosyl-L-methionine-dependent methyltransferase activity. In Rhodococcus jostii (strain RHA1), this protein is Putative S-adenosyl-L-methionine-dependent methyltransferase RHA1_ro00605.